We begin with the raw amino-acid sequence, 408 residues long: Serine/threonine-protein kinase UCNL (408 aa).

Residues 21-341 form the Protein kinase domain; the sequence is IKALKILGKG…AAEIKELAFF (321 aa). ATP contacts are provided by residues 27-35 and K54; that span reads LGKGATGTV. Residue D152 is the Proton acceptor of the active site. The AGC-kinase C-terminal domain maps to 342 to 408; it reads AGVRWDLLTE…CRKNDPFIEF (67 aa).

Belongs to the protein kinase superfamily. AGC Ser/Thr protein kinase family. In terms of tissue distribution, expressed in the epidermis and cortex of the transition zone of the root apex. Expressed in rosette leaves, stems, flowers and siliques.

It localises to the cytoplasm. It is found in the nucleus. The catalysed reaction is L-seryl-[protein] + ATP = O-phospho-L-seryl-[protein] + ADP + H(+). It carries out the reaction L-threonyl-[protein] + ATP = O-phospho-L-threonyl-[protein] + ADP + H(+). Functionally, regulates planar ovule integument development. This is Serine/threonine-protein kinase UCNL from Arabidopsis thaliana (Mouse-ear cress).